The primary structure comprises 34 residues: Beta/mu-theraphotoxin-Pe1a (34 aa).

Disulfide bonds link cysteine 2–cysteine 16, cysteine 9–cysteine 21, and cysteine 15–cysteine 28.

This sequence belongs to the neurotoxin 10 (Hwtx-1) family. 54 (ProTx-1) subfamily. Expressed by the venom gland.

It is found in the secreted. Ion channel impairing toxin that inhibits voltage-gated sodium channels. The recombinantly expressed toxin shows a weak activity against Nav1.7/SCN9A (25% inhibition at 10 uM), and shifts the voltage dependence of channel activation to more depolarized potentials. The chain is Beta/mu-theraphotoxin-Pe1a from Phormingochilus everetti (Malaysian purple earth tiger tarantula).